The sequence spans 302 residues: Bifunctional phosphoglucose/phosphomannose isomerase (302 aa).

Positions 27–160 (VEGEVVRIEA…KVYGIDVKIP (134 aa)) constitute an SIS domain. D-fructose 6-phosphate contacts are provided by Gly47, Ser48, Ser87, Ser89, Thr92, and Arg135. Positions 47, 48, 87, 89, 92, and 135 each coordinate D-glucose 6-phosphate. The active-site Proton acceptor is the Glu203. Positions 219 and 298 each coordinate D-fructose 6-phosphate. The D-glucose 6-phosphate site is built by His219 and Lys298. His219 (proton donor) is an active-site residue. The active-site Proton acceptor is the Lys298.

This sequence belongs to the PGI/PMI family. Homodimer.

It is found in the cytoplasm. The enzyme catalyses alpha-D-glucose 6-phosphate = beta-D-fructose 6-phosphate. It carries out the reaction D-mannose 6-phosphate = D-fructose 6-phosphate. Its activity is regulated as follows. Inhibited by 5-phosphoarabinonate (PAB) and 6-phosphogluconate. Functionally, dual specificity isomerase that catalyzes the isomerization of both glucose-6-phosphate and mannose-6-phosphate to fructose-6-phosphate with similar catalytic efficiency. The polypeptide is Bifunctional phosphoglucose/phosphomannose isomerase (Pyrobaculum aerophilum (strain ATCC 51768 / DSM 7523 / JCM 9630 / CIP 104966 / NBRC 100827 / IM2)).